A 216-amino-acid polypeptide reads, in one-letter code: Cytidylate kinase (216 aa).

Residue 7–15 (GPSGTGKST) participates in ATP binding.

This sequence belongs to the cytidylate kinase family. Type 1 subfamily.

It is found in the cytoplasm. The enzyme catalyses CMP + ATP = CDP + ADP. It carries out the reaction dCMP + ATP = dCDP + ADP. This is Cytidylate kinase from Chlamydia trachomatis serovar D (strain ATCC VR-885 / DSM 19411 / UW-3/Cx).